The chain runs to 149 residues: Transcriptional regulator MraZ (149 aa).

SpoVT-AbrB domains lie at arginine 6–aspartate 52 and valine 81–glutamate 124.

Belongs to the MraZ family. In terms of assembly, forms oligomers.

It is found in the cytoplasm. The protein resides in the nucleoid. This Oleidesulfovibrio alaskensis (strain ATCC BAA-1058 / DSM 17464 / G20) (Desulfovibrio alaskensis) protein is Transcriptional regulator MraZ.